We begin with the raw amino-acid sequence, 212 residues long: ECF RNA polymerase sigma factor SigD (212 aa).

The sigma-70 factor domain-2 stretch occupies residues 49 to 119; it reads ETIRPIVVRY…VADAHRAAGR (71 aa). Residues 75-78 carry the Polymerase core binding motif; it reads DVAQ. The interval 152–201 is sigma-70 factor domain-4; it reads NELLEILPAKQREILILRVVVGLSAEETAAAVGSTTGAVRVAQHRALQRL. Residues 176–195 constitute a DNA-binding region (H-T-H motif); it reads AEETAAAVGSTTGAVRVAQH.

Belongs to the sigma-70 factor family. ECF subfamily. In terms of assembly, interacts transiently with the RNA polymerase catalytic core formed by RpoA, RpoB, RpoC and RpoZ (2 alpha, 1 beta, 1 beta' and 1 omega subunit) to form the RNA polymerase holoenzyme that can initiate transcription. Interacts (via sigma-70 factor domain 4) with RsdA.

Functionally, sigma factors are initiation factors that promote the attachment of RNA polymerase to specific initiation sites and are then released. Extracytoplasmic function (ECF) sigma factors are held in an inactive form by an anti-sigma factor until released by regulated intramembrane proteolysis. The protein is ECF RNA polymerase sigma factor SigD (sigD) of Mycobacterium bovis (strain ATCC BAA-935 / AF2122/97).